The following is a 278-amino-acid chain: S-formylglutathione hydrolase YeiG (278 aa).

Active-site charge relay system residues include Ser-145, Asp-223, and His-256.

Belongs to the esterase D family.

It carries out the reaction S-formylglutathione + H2O = formate + glutathione + H(+). In terms of biological role, serine hydrolase involved in the detoxification of formaldehyde. Hydrolyzes S-formylglutathione to glutathione and formate. The polypeptide is S-formylglutathione hydrolase YeiG (yeiG) (Escherichia coli (strain SMS-3-5 / SECEC)).